A 166-amino-acid chain; its full sequence is Lipoprotein signal peptidase (166 aa).

3 consecutive transmembrane segments (helical) span residues 12–32 (WLWVVVAVLIIDLGSKFLILQ), 70–90 (WFFSGIAIGICVVLTVLMYRS), and 102–122 (ALIIGGALGNLFDRLWHGFVV). Residues aspartate 123 and aspartate 141 contribute to the active site. Residues 137–157 (FNLADSAICIGAALIVLEGFL) form a helical membrane-spanning segment.

This sequence belongs to the peptidase A8 family.

The protein localises to the cell inner membrane. The enzyme catalyses Release of signal peptides from bacterial membrane prolipoproteins. Hydrolyzes -Xaa-Yaa-Zaa-|-(S,diacylglyceryl)Cys-, in which Xaa is hydrophobic (preferably Leu), and Yaa (Ala or Ser) and Zaa (Gly or Ala) have small, neutral side chains.. Its pathway is protein modification; lipoprotein biosynthesis (signal peptide cleavage). This protein specifically catalyzes the removal of signal peptides from prolipoproteins. This chain is Lipoprotein signal peptidase, found in Klebsiella pneumoniae (strain 342).